Reading from the N-terminus, the 344-residue chain is tRNA N6-adenosine threonylcarbamoyltransferase (344 aa).

The Fe cation site is built by histidine 110 and histidine 114. Substrate is bound by residues 133–137 (VMSGA), aspartate 166, glycine 179, and asparagine 278. Aspartate 303 is a Fe cation binding site.

This sequence belongs to the KAE1 / TsaD family. Fe(2+) serves as cofactor.

Its subcellular location is the cytoplasm. It catalyses the reaction L-threonylcarbamoyladenylate + adenosine(37) in tRNA = N(6)-L-threonylcarbamoyladenosine(37) in tRNA + AMP + H(+). Functionally, required for the formation of a threonylcarbamoyl group on adenosine at position 37 (t(6)A37) in tRNAs that read codons beginning with adenine. Is involved in the transfer of the threonylcarbamoyl moiety of threonylcarbamoyl-AMP (TC-AMP) to the N6 group of A37, together with TsaE and TsaB. TsaD likely plays a direct catalytic role in this reaction. This chain is tRNA N6-adenosine threonylcarbamoyltransferase, found in Chlamydia felis (strain Fe/C-56) (Chlamydophila felis).